We begin with the raw amino-acid sequence, 729 residues long: Fatty acid oxidation complex subunit alpha (729 aa).

The tract at residues 1–189 is enoyl-CoA hydratase/isomerase; that stretch reads MLYQSETLQL…KIGLVDAVVD (189 aa). Substrate is bound at residue aspartate 296. The tract at residues 311–729 is 3-hydroxyacyl-CoA dehydrogenase; it reads AAPKLAAVLG…LLDVSTNQPA (419 aa). Residues methionine 324, aspartate 343, 400 to 402, lysine 407, and serine 429 contribute to the NAD(+) site; that span reads VVE. Residue histidine 450 is the For 3-hydroxyacyl-CoA dehydrogenase activity of the active site. NAD(+) is bound at residue asparagine 453. Asparagine 500 and tyrosine 660 together coordinate substrate.

In the N-terminal section; belongs to the enoyl-CoA hydratase/isomerase family. It in the C-terminal section; belongs to the 3-hydroxyacyl-CoA dehydrogenase family. Heterotetramer of two alpha chains (FadB) and two beta chains (FadA).

It catalyses the reaction a (3S)-3-hydroxyacyl-CoA + NAD(+) = a 3-oxoacyl-CoA + NADH + H(+). The catalysed reaction is a (3S)-3-hydroxyacyl-CoA = a (2E)-enoyl-CoA + H2O. It carries out the reaction a 4-saturated-(3S)-3-hydroxyacyl-CoA = a (3E)-enoyl-CoA + H2O. The enzyme catalyses (3S)-3-hydroxybutanoyl-CoA = (3R)-3-hydroxybutanoyl-CoA. It catalyses the reaction a (3Z)-enoyl-CoA = a 4-saturated (2E)-enoyl-CoA. The catalysed reaction is a (3E)-enoyl-CoA = a 4-saturated (2E)-enoyl-CoA. It participates in lipid metabolism; fatty acid beta-oxidation. In terms of biological role, involved in the aerobic and anaerobic degradation of long-chain fatty acids via beta-oxidation cycle. Catalyzes the formation of 3-oxoacyl-CoA from enoyl-CoA via L-3-hydroxyacyl-CoA. It can also use D-3-hydroxyacyl-CoA and cis-3-enoyl-CoA as substrate. In Yersinia pestis bv. Antiqua (strain Antiqua), this protein is Fatty acid oxidation complex subunit alpha.